The sequence spans 142 residues: Large-conductance mechanosensitive channel (142 aa).

Helical transmembrane passes span 14–34 (VVDL…VNSL), 38–58 (VIMP…YYIP), and 82–102 (GQFL…FMVI).

Belongs to the MscL family. In terms of assembly, homopentamer.

It is found in the cell inner membrane. Channel that opens in response to stretch forces in the membrane lipid bilayer. May participate in the regulation of osmotic pressure changes within the cell. This is Large-conductance mechanosensitive channel from Methylorubrum populi (strain ATCC BAA-705 / NCIMB 13946 / BJ001) (Methylobacterium populi).